The sequence spans 1401 residues: DNA-directed RNA polymerase subunit beta (1401 aa).

Belongs to the RNA polymerase beta chain family. As to quaternary structure, the RNAP catalytic core consists of 2 alpha, 1 beta, 1 beta' and 1 omega subunit. When a sigma factor is associated with the core the holoenzyme is formed, which can initiate transcription.

It carries out the reaction RNA(n) + a ribonucleoside 5'-triphosphate = RNA(n+1) + diphosphate. In terms of biological role, DNA-dependent RNA polymerase catalyzes the transcription of DNA into RNA using the four ribonucleoside triphosphates as substrates. The polypeptide is DNA-directed RNA polymerase subunit beta (Desulforapulum autotrophicum (strain ATCC 43914 / DSM 3382 / VKM B-1955 / HRM2) (Desulfobacterium autotrophicum)).